Here is a 227-residue protein sequence, read N- to C-terminus: Chalcone--flavanone isomerase 2-B (227 aa).

The substrate site is built by threonine 50, asparagine 115, and threonine 193.

It belongs to the chalcone isomerase family.

The enzyme catalyses a chalcone = a flavanone.. The protein operates within secondary metabolite biosynthesis; flavonoid biosynthesis. Functionally, catalyzes the intramolecular cyclization of bicyclic chalcones into tricyclic (S)-flavanones. Responsible for the isomerization of 4,2',4',6'-tetrahydroxychalcone (also termed chalcone) into naringenin. The polypeptide is Chalcone--flavanone isomerase 2-B (CHI2-B) (Glycine max (Soybean)).